The chain runs to 293 residues: Aspartate carbamoyltransferase catalytic subunit (293 aa).

Residues arginine 50 and threonine 51 each coordinate carbamoyl phosphate. Lysine 78 is a binding site for L-aspartate. The carbamoyl phosphate site is built by arginine 100, histidine 127, and glutamine 130. L-aspartate is bound by residues arginine 160 and arginine 210. Residues alanine 253 and proline 254 each contribute to the carbamoyl phosphate site.

The protein belongs to the aspartate/ornithine carbamoyltransferase superfamily. ATCase family. Heterododecamer (2C3:3R2) of six catalytic PyrB chains organized as two trimers (C3), and six regulatory PyrI chains organized as three dimers (R2).

It carries out the reaction carbamoyl phosphate + L-aspartate = N-carbamoyl-L-aspartate + phosphate + H(+). It participates in pyrimidine metabolism; UMP biosynthesis via de novo pathway; (S)-dihydroorotate from bicarbonate: step 2/3. Catalyzes the condensation of carbamoyl phosphate and aspartate to form carbamoyl aspartate and inorganic phosphate, the committed step in the de novo pyrimidine nucleotide biosynthesis pathway. This is Aspartate carbamoyltransferase catalytic subunit from Staphylococcus aureus (strain USA300).